A 225-amino-acid polypeptide reads, in one-letter code: Urease accessory protein UreG (225 aa).

25-32 (GPVGAGKT) is a binding site for GTP.

This sequence belongs to the SIMIBI class G3E GTPase family. UreG subfamily. In terms of assembly, homodimer. UreD, UreF and UreG form a complex that acts as a GTP-hydrolysis-dependent molecular chaperone, activating the urease apoprotein by helping to assemble the nickel containing metallocenter of UreC. The UreE protein probably delivers the nickel.

The protein resides in the cytoplasm. Functionally, facilitates the functional incorporation of the urease nickel metallocenter. This process requires GTP hydrolysis, probably effectuated by UreG. The protein is Urease accessory protein UreG of Haemophilus influenzae (strain ATCC 51907 / DSM 11121 / KW20 / Rd).